Here is a 2605-residue protein sequence, read N- to C-terminus: Protein ABERRANT POLLEN TRANSMISSION 1 (2605 aa).

The N-terminal stretch at 1-43 (MMLGLVQLLVGFVVAWEAVELVLRHGLLLSVFKLAILAALAAA) is a signal peptide. The tract at residues 137 to 158 (STNKKKPAPRKPISTTTAKAKG) is disordered. N-linked (GlcNAc...) asparagine glycans are attached at residues Asn-232, Asn-320, Asn-348, Asn-516, Asn-587, Asn-628, Asn-696, Asn-779, Asn-1171, Asn-1318, and Asn-1459. The disordered stretch occupies residues 305–326 (SASTVAEQKDEPSVDNKSAARS). The span at 311–326 (EQKDEPSVDNKSAARS) shows a compositional bias: basic and acidic residues. Residues 1761-1818 (MSKDGALSSVSSTSQPSEPQQIKSSESPPSNGSGKPDLTSSSENALKRSNNSDSEEEG) are disordered. The segment covering 1768 to 1781 (SSVSSTSQPSEPQQ) has biased composition (low complexity). Positions 1782 to 1812 (IKSSESPPSNGSGKPDLTSSSENALKRSNNS) are enriched in polar residues. 5 N-linked (GlcNAc...) asparagine glycosylation sites follow: Asn-1791, Asn-1810, Asn-2003, Asn-2280, and Asn-2291. Disordered stretches follow at residues 2269–2312 (VSTT…SSFD) and 2332–2361 (EGQT…REDK). The span at 2281–2300 (TSVAETNSPNNQSSKETTFA) shows a compositional bias: polar residues. 2 stretches are compositionally biased toward basic and acidic residues: residues 2303–2312 (PELRRTSSFD) and 2343–2361 (DAAK…REDK). Residues Asn-2468 and Asn-2564 are each glycosylated (N-linked (GlcNAc...) asparagine). Residues 2574–2605 (TELEVAELPPRAPGYNTDSSSDSSSAETSPKD) form a disordered region.

The protein belongs to the SABRE family. Mature pollen-specific.

It is found in the secreted. It localises to the golgi apparatus. In terms of biological role, may be involved in membrane trafficking. Required for tip growth in pollen tubes and root hairs. This Zea mays (Maize) protein is Protein ABERRANT POLLEN TRANSMISSION 1.